Consider the following 378-residue polypeptide: 7-methylxanthine methyltransferase 1 (378 aa).

S-adenosyl-L-homocysteine-binding residues include Tyr18, Cys61, Asn66, Asp100, Leu101, Ser139, Phe140, and Cys156. Theobromine-binding residues include Tyr157, His160, and Trp161. Positions 178, 260, 262, and 263 each coordinate Mg(2+). Theobromine is bound at residue Tyr362.

Belongs to the methyltransferase superfamily. Type-7 methyltransferase family. Requires Mg(2+) as cofactor. In terms of tissue distribution, mainly expressed, at low levels, in leaves and fruits (grains). Also present, at lower levels, in roots, stamens and pistils.

Its subcellular location is the cytoplasm. It carries out the reaction 7-methylxanthine + S-adenosyl-L-methionine = theobromine + S-adenosyl-L-homocysteine + H(+). The protein operates within alkaloid biosynthesis. Its function is as follows. Involved in the biosynthesis of caffeine. Catalyzes the conversion of 7-methylxanthine (7mX) to theobromine and of paraxanthine to caffeine. In Coffea canephora (Robusta coffee), this protein is 7-methylxanthine methyltransferase 1.